A 1087-amino-acid chain; its full sequence is Exportin-7-A (1087 aa).

The Importin N-terminal domain maps to 30 to 96 (AEKALVEFTN…RNYVLTYLAT (67 aa)).

Belongs to the exportin family. In terms of tissue distribution, expressed in oocytes (at protein level).

The protein resides in the cytoplasm. The protein localises to the nucleus. Mediates the nuclear export of proteins (cargos) with broad substrate specificity. The chain is Exportin-7-A (xpo7-a) from Xenopus laevis (African clawed frog).